An 876-amino-acid polypeptide reads, in one-letter code: MIERVKIENLRSHSSTEIEFREGINVLVGPNGAGKTTVLEAITLALFPRTFRSYDHMIREGERRAVVEVVFWGADGHKYKVRREFYRGGGQRNPRLYREEGDGWKVVASGRAEDVDREVMNALGGVDRDVFREAVYIRQGEIAKLVEATREERKRIVDRTLGLAEFKKAREQAHELLRVAEAKLETFRERVRDLKGSKKELKRVERELEELKREVKELEPEVEELKERLNELREAKREFERLEGELRLLENKIESLKGRRDDLRKLVEEGKEAERELQRLGDVPSKVRELENEEAELRRRIEELRNLLDDLRSLRNRLESAEEELEGVKRELEELKDEAGVDPERLVEFKDKIVEASERLRDLRREEELKRKLEKVSDELSELGDREETLQSEYEELQERLDEIQGELKEIRVKEKELLERIESLREAEGECPVCLRKLPRERAEKLLRDAEKELERLQGREEDLRKERRELKDRLESVRRELEGTKERMWRLRERREELERELEEIEELKEELADLSRELGVEEDRLPELRDLAVRAESLLRDLERRRGDVLRLEKELERTLDRCEKVIGRTPSGVEDVEEELRRLEEERDHVGQKLREAEGELERYHNLEEKVKRAREARKELKRIERDLEDAKGRLEQVERNLEGLRERYGSEDRLEEELESVEKKYERVRDKLSEVKGRLNGMEKRREELKKQVRKYREAKERKERLERVVEVLSLCKEVFRYSRDVAREKVLPAVEREASKILQDLSDRYGSLRIEDDGAVIRVSVPGGHFIEADRMSGGEKIIIGLALRLALAMVGSSFAPFIMLDEPTVHLDAEHRERLAQALRELDLGKGRVRQAIVVTHDEELEDAADELWRIENRAGESRVERYSG.

ATP is bound by residues Arg11, 31-37 (NGAGKTT), and Gln139. Coiled-coil stretches lie at residues 188–528 (RERV…EDRL) and 575–710 (SGVE…RKER). The region spanning 387–484 (EETLQSEYEE…RLESVRRELE (98 aa)) is the Zinc-hook domain. Residues Cys432 and Cys435 each contribute to the Zn(2+) site.

Belongs to the SMC family. RAD50 subfamily. In terms of assembly, homodimer. Forms a heterotetramer composed of two Mre11 subunits and two Rad50 subunits. Zn(2+) is required as a cofactor.

Functionally, part of the Rad50/Mre11 complex, which is involved in the early steps of DNA double-strand break (DSB) repair. The complex may facilitate opening of the processed DNA ends to aid in the recruitment of HerA and NurA. Rad50 controls the balance between DNA end bridging and DNA resection via ATP-dependent structural rearrangements of the Rad50/Mre11 complex. The protein is DNA double-strand break repair Rad50 ATPase of Methanopyrus kandleri (strain AV19 / DSM 6324 / JCM 9639 / NBRC 100938).